The following is a 223-amino-acid chain: Kinetochore protein Spc25 (223 aa).

A coiled-coil region spans residues 51-116 (RHQRKVGKLQ…QRKNEIMERI (66 aa)).

The protein belongs to the SPC25 family. Component of the Ndc80 complex, which is composed of Ndc80, Nuf2 and Spc25.

Its subcellular location is the nucleus. The protein localises to the chromosome. The protein resides in the centromere. It is found in the kinetochore. In terms of biological role, acts as a component of the essential kinetochore-associated Ndc80 complex, which is required for chromosome segregation and spindle checkpoint activity during meiosis and mitosis. Required for kinetochore integrity and the organization of stable microtubule binding sites in the outer plate of the kinetochore. Participates in SAC signaling that responds specifically to disruptions in spindle microtubule dynamics. The NDC80 complex synergistically enhances the affinity of the SKA1 complex for microtubules and may allow the NDC80 complex to track depolymerizing microtubules. This is Kinetochore protein Spc25 from Drosophila yakuba (Fruit fly).